Here is a 517-residue protein sequence, read N- to C-terminus: Fatty acyl-CoA reductase wat (517 aa).

2 helical membrane-spanning segments follow: residues 378 to 398 and 492 to 512; these read ILCF…MVII and VLHY…LYAL.

It belongs to the fatty acyl-CoA reductase family.

The protein localises to the apical cell membrane. The enzyme catalyses a long-chain fatty acyl-CoA + 2 NADPH + 2 H(+) = a long-chain primary fatty alcohol + 2 NADP(+) + CoA. In terms of biological role, catalyzes the reduction of saturated fatty acyl-CoA to fatty alcohols. The preferred substrates are C24:0 and C26:0. Necessary for the final stages of tracheal maturation, to facilitate the transition from water-filled to gas-filled tubes. May help to maintain the integrity of the outer hydrophobic envelope of the trachea. The protein is Fatty acyl-CoA reductase wat of Drosophila melanogaster (Fruit fly).